The chain runs to 536 residues: ATP synthase subunit alpha, mitochondrial (536 aa).

A mitochondrion-targeting transit peptide spans 1-24 (MFKNALRRAGVAAPRISRVAQRGY). Residue 195 to 202 (GDRQTGKT) participates in ATP binding.

F-type ATP synthases have 2 components, the catalytic core F(1) and the membrane-embedded component F(0), linked together by a central stalk and a peripheral stalk. The central stalk, also called rotor shaft, is often seen as part of F(1). The peripheral stalk is seen as part of F(0). F(0) contains the membrane channel next to the rotor. F-type ATP synthases form dimers but each monomer functions independently in ATP generation. The dimer consists of 17 different polypeptides: ATP1 (subunit alpha, 3 molecules per monomer, part of F(1)), ATP2 (subunit beta, 3 copies per monomer, part of F(1)), ATP3 (subunit gamma, part of the central stalk), ATP4 (subunit b, part of the peripheral stalk), ATP5/OSCP (subunit 5/OSCP, part of the peripheral stalk), ATP6 (subunit a, part of the peripheral stalk), ATP7 (subunit d, part of the peripheral stalk), ATP8 (subunit 8, part of the peripheral stalk), OLI1 (subunit c, part of the rotor, 10 molecules per monomer), ATP14 (subunit h, part of the peripheral stalk), ATP15 (subunit epsilon, part of the central stalk), ATP16 (subunit delta, part of the central stalk), ATP17 (subunit f, part of the peripheral stalk), ATP18 (subunit i/j, part of the peripheral stalk), ATP19 (subunit k, dimer-specific, at interface between monomers), ATP20 (subunit g, at interface between monomers), TIM11 (subunit e, at interface between monomers).

The protein localises to the mitochondrion inner membrane. Mitochondrial membrane ATP synthase (F(1)F(0) ATP synthase or Complex V) produces ATP from ADP in the presence of a proton gradient across the membrane which is generated by electron transport complexes of the respiratory chain. F-type ATP synthases consist of two structural domains, F(1) - containing the extramembraneous catalytic core, and F(0) - containing the membrane proton channel, linked together by a central stalk and a peripheral stalk. During catalysis, ATP synthesis in the catalytic domain of F(1) is coupled via a rotary mechanism of the central stalk subunits to proton translocation. Subunits alpha/ATP1 and beta/ATP2 form the catalytic core in F(1). Rotation of the central stalk against the surrounding alpha/ATP1(3)beta/ATP2(3) subunits leads to hydrolysis of ATP in three separate catalytic sites on the beta/ATP2 subunits. Subunit alpha/ATP1 does not bear the catalytic high-affinity ATP-binding sites. In Yarrowia lipolytica (strain CLIB 122 / E 150) (Yeast), this protein is ATP synthase subunit alpha, mitochondrial.